The chain runs to 319 residues: Small ribosomal subunit protein mS35 (319 aa).

A mitochondrion-targeting transit peptide spans 1–30 (MKVPLGLWKVSRGNLWSTQKRVLTMSRCLN).

The protein belongs to the mitochondrion-specific ribosomal protein mS35 family. In terms of assembly, component of the mitochondrial small ribosomal subunit (mt-SSU). Mature yeast 74S mitochondrial ribosomes consist of a small (37S) and a large (54S) subunit. The 37S small subunit contains a 15S ribosomal RNA (15S mt-rRNA) and 34 different proteins. The 54S large subunit contains a 21S rRNA (21S mt-rRNA) and 46 different proteins.

The protein localises to the mitochondrion. Component of the mitochondrial ribosome (mitoribosome), a dedicated translation machinery responsible for the synthesis of mitochondrial genome-encoded proteins, including at least some of the essential transmembrane subunits of the mitochondrial respiratory chain. The mitoribosomes are attached to the mitochondrial inner membrane and translation products are cotranslationally integrated into the membrane. This chain is Small ribosomal subunit protein mS35 (RSM24), found in Saccharomyces cerevisiae (strain ATCC 204508 / S288c) (Baker's yeast).